The primary structure comprises 686 residues: Solute carrier family 22 member 23 (686 aa).

Disordered regions lie at residues 1–62 (MAID…GGGP) and 169–193 (GNRSNSSGADGGDTPPLPSPPDKGD). A glycan (N-linked (GlcNAc...) asparagine) is linked at Asn-24. Transmembrane regions (helical) follow at residues 234 to 254 (FSLLVGLIFGYLITGCIADWV) and 258 to 278 (PVLLFSIIFILIFGLTVALSV). Asn-279 is a glycosylation site (N-linked (GlcNAc...) asparagine). 8 helical membrane passes run 288–308 (FFEGFCLAGIILTLYALRIEL), 315–335 (FMITMVASFVAMAGQFLMPGL), 344–364 (VLQALIICPFLLMLLYWSIFP), 467–487 (ADYYTTASIALVSCLAMCVVV), 494–514 (GGLLLFMILTALASLLQLGLL), 538–558 (IAFSIVGMFASHAVGSLSVFF), 569–589 (CGGLGLVLASAGFGMLTAPII), and 598–618 (FLHHIIFACCTLICIICILLL).

This sequence belongs to the major facilitator (TC 2.A.1) superfamily. Organic cation transporter (TC 2.A.1.19) family.

It localises to the membrane. The polypeptide is Solute carrier family 22 member 23 (SLC22A23) (Homo sapiens (Human)).